Reading from the N-terminus, the 232-residue chain is Ubiquinone biosynthesis O-methyltransferase (232 aa).

S-adenosyl-L-methionine-binding residues include R36, G55, D76, and M120.

This sequence belongs to the methyltransferase superfamily. UbiG/COQ3 family.

The catalysed reaction is a 3-demethylubiquinol + S-adenosyl-L-methionine = a ubiquinol + S-adenosyl-L-homocysteine + H(+). The enzyme catalyses a 3-(all-trans-polyprenyl)benzene-1,2-diol + S-adenosyl-L-methionine = a 2-methoxy-6-(all-trans-polyprenyl)phenol + S-adenosyl-L-homocysteine + H(+). It functions in the pathway cofactor biosynthesis; ubiquinone biosynthesis. Its function is as follows. O-methyltransferase that catalyzes the 2 O-methylation steps in the ubiquinone biosynthetic pathway. The protein is Ubiquinone biosynthesis O-methyltransferase of Burkholderia lata (strain ATCC 17760 / DSM 23089 / LMG 22485 / NCIMB 9086 / R18194 / 383).